Consider the following 158-residue polypeptide: Transcription elongation factor GreA (158 aa).

A coiled-coil region spans residues 48-74; that stretch reads EYDAAKNRQGFIEGRIKELNDKIARAE.

It belongs to the GreA/GreB family.

Its function is as follows. Necessary for efficient RNA polymerase transcription elongation past template-encoded arresting sites. The arresting sites in DNA have the property of trapping a certain fraction of elongating RNA polymerases that pass through, resulting in locked ternary complexes. Cleavage of the nascent transcript by cleavage factors such as GreA or GreB allows the resumption of elongation from the new 3'terminus. GreA releases sequences of 2 to 3 nucleotides. The protein is Transcription elongation factor GreA of Syntrophotalea carbinolica (strain DSM 2380 / NBRC 103641 / GraBd1) (Pelobacter carbinolicus).